The primary structure comprises 142 residues: MAPKKKVTGLIKLQIQAGQANPAPPVGPALGQHGVNIMEFCKAYNAATESQRGNVIPVEITVYEDRSFTFALKTPPAAKLLLKAAGVPKGSGEPHKTKVAKVTWDQVREIAETKKSDLNANDIDQAAKIIAGTARSMGITVE.

Belongs to the universal ribosomal protein uL11 family. Part of the ribosomal stalk of the 50S ribosomal subunit. Interacts with L10 and the large rRNA to form the base of the stalk. L10 forms an elongated spine to which L12 dimers bind in a sequential fashion forming a multimeric L10(L12)X complex. In terms of processing, one or more lysine residues are methylated.

Forms part of the ribosomal stalk which helps the ribosome interact with GTP-bound translation factors. The sequence is that of Large ribosomal subunit protein uL11 from Mycobacterium sp. (strain JLS).